The following is a 148-amino-acid chain: Isotocin-neurophysin IT 2 (148 aa).

An N-terminal signal peptide occupies residues 1–20 (MSGSMSSVFSLLYLLSVCSA). Cysteine 21 and cysteine 26 are oxidised to a cystine. Glycine 29 carries the glycine amide modification. Cystine bridges form between cysteine 42–cysteine 86, cysteine 45–cysteine 59, cysteine 53–cysteine 76, cysteine 60–cysteine 66, cysteine 93–cysteine 105, cysteine 99–cysteine 117, and cysteine 106–cysteine 111.

This sequence belongs to the vasopressin/oxytocin family.

Functionally, isotocin causes contraction of smooth muscles. The polypeptide is Isotocin-neurophysin IT 2 (Catostomus commersonii (White sucker)).